Reading from the N-terminus, the 81-residue chain is Putative defensin-like protein 102 (81 aa).

The N-terminal stretch at 1–24 is a signal peptide; the sequence is MTTTMKTFVAFVLTVFFIMSSAHC. Disulfide bonds link C43-C78, C49-C71, C57-C76, and C61-C77.

It belongs to the DEFL family.

The protein localises to the secreted. This is Putative defensin-like protein 102 from Arabidopsis thaliana (Mouse-ear cress).